The chain runs to 212 residues: Thiamine-phosphate synthase (212 aa).

Residues 39 to 43 (QLRIK) and N71 each bind 4-amino-2-methyl-5-(diphosphooxymethyl)pyrimidine. Mg(2+)-binding residues include D72 and D91. S110 contributes to the 4-amino-2-methyl-5-(diphosphooxymethyl)pyrimidine binding site. 136–138 (TQT) lines the 2-[(2R,5Z)-2-carboxy-4-methylthiazol-5(2H)-ylidene]ethyl phosphate pocket. K139 serves as a coordination point for 4-amino-2-methyl-5-(diphosphooxymethyl)pyrimidine. Residues G168 and 188–189 (VS) each bind 2-[(2R,5Z)-2-carboxy-4-methylthiazol-5(2H)-ylidene]ethyl phosphate.

The protein belongs to the thiamine-phosphate synthase family. Requires Mg(2+) as cofactor.

The enzyme catalyses 2-[(2R,5Z)-2-carboxy-4-methylthiazol-5(2H)-ylidene]ethyl phosphate + 4-amino-2-methyl-5-(diphosphooxymethyl)pyrimidine + 2 H(+) = thiamine phosphate + CO2 + diphosphate. It catalyses the reaction 2-(2-carboxy-4-methylthiazol-5-yl)ethyl phosphate + 4-amino-2-methyl-5-(diphosphooxymethyl)pyrimidine + 2 H(+) = thiamine phosphate + CO2 + diphosphate. It carries out the reaction 4-methyl-5-(2-phosphooxyethyl)-thiazole + 4-amino-2-methyl-5-(diphosphooxymethyl)pyrimidine + H(+) = thiamine phosphate + diphosphate. Its pathway is cofactor biosynthesis; thiamine diphosphate biosynthesis; thiamine phosphate from 4-amino-2-methyl-5-diphosphomethylpyrimidine and 4-methyl-5-(2-phosphoethyl)-thiazole: step 1/1. In terms of biological role, condenses 4-methyl-5-(beta-hydroxyethyl)thiazole monophosphate (THZ-P) and 2-methyl-4-amino-5-hydroxymethyl pyrimidine pyrophosphate (HMP-PP) to form thiamine monophosphate (TMP). In Serratia proteamaculans (strain 568), this protein is Thiamine-phosphate synthase.